The chain runs to 629 residues: tRNA uridine 5-carboxymethylaminomethyl modification enzyme MnmG (629 aa).

Residues G13 to G18, V125, and S180 contribute to the FAD site. Position 273–287 (G273–F287) interacts with NAD(+). Q370 serves as a coordination point for FAD.

Belongs to the MnmG family. As to quaternary structure, homodimer. Heterotetramer of two MnmE and two MnmG subunits. It depends on FAD as a cofactor.

Its subcellular location is the cytoplasm. NAD-binding protein involved in the addition of a carboxymethylaminomethyl (cmnm) group at the wobble position (U34) of certain tRNAs, forming tRNA-cmnm(5)s(2)U34. The chain is tRNA uridine 5-carboxymethylaminomethyl modification enzyme MnmG from Shigella sonnei (strain Ss046).